Reading from the N-terminus, the 582-residue chain is Hemagglutinin-neuraminidase (582 aa).

Topologically, residues 1-34 (MEPSKLFTISDNATFAPGPVNNAADKKTFRTCFR) are intravirion. Residues 35–55 (ILVLSVQAVTLILVIVTLGEL) form a helical; Signal-anchor for type II membrane protein membrane-spanning segment. The Virion surface portion of the chain corresponds to 56-582 (VRMINDQGLS…LPVLTRLTIT (527 aa)). Asn-127 is a glycosylation site (N-linked (GlcNAc...) asparagine; by host). 3 cysteine pairs are disulfide-bonded: Cys-178/Cys-202, Cys-192/Cys-253, and Cys-244/Cys-257. Residues 240–245 (NRKSCS) form an involved in neuraminidase activity region. N-linked (GlcNAc...) asparagine; by host glycans are attached at residues Asn-284 and Asn-329. Cystine bridges form between Cys-350–Cys-471, Cys-382–Cys-392, and Cys-465–Cys-475. Residues Asn-400 and Asn-448 are each glycosylated (N-linked (GlcNAc...) asparagine; by host). An N-linked (GlcNAc...) asparagine; by host glycan is attached at Asn-507. The cysteines at positions 545 and 556 are disulfide-linked.

This sequence belongs to the paramyxoviruses hemagglutinin-neuraminidase family. Homotetramer; composed of disulfide-linked homodimers. Interacts with F protein trimer.

The protein localises to the virion membrane. It is found in the host cell membrane. The enzyme catalyses Hydrolysis of alpha-(2-&gt;3)-, alpha-(2-&gt;6)-, alpha-(2-&gt;8)- glycosidic linkages of terminal sialic acid residues in oligosaccharides, glycoproteins, glycolipids, colominic acid and synthetic substrates.. Functionally, attaches the virus to alpha-2,3-linked sialic acid-containing cell receptors and thereby initiating infection. Binding of HN protein to the receptor induces a conformational change that allows the F protein to trigger virion/cell membranes fusion. Binds to the glycan motifs sialyl Lewis (SLe) and GM2 ganglioside (GM2-glycan). Its function is as follows. Neuraminidase activity ensures the efficient spread of the virus by dissociating the mature virions from the neuraminic acid containing glycoproteins. The protein is Hemagglutinin-neuraminidase (HN) of Mumps virus (strain RW) (MuV).